A 426-amino-acid chain; its full sequence is Histidine--tRNA ligase (426 aa).

This sequence belongs to the class-II aminoacyl-tRNA synthetase family. As to quaternary structure, homodimer.

The protein resides in the cytoplasm. The catalysed reaction is tRNA(His) + L-histidine + ATP = L-histidyl-tRNA(His) + AMP + diphosphate + H(+). The chain is Histidine--tRNA ligase from Lactiplantibacillus plantarum (strain ATCC BAA-793 / NCIMB 8826 / WCFS1) (Lactobacillus plantarum).